A 21-amino-acid polypeptide reads, in one-letter code: Hemocyanin subunit 6 (21 aa).

The protein belongs to the tyrosinase family. Hemocyanin subfamily. In terms of tissue distribution, hemolymph.

The protein localises to the secreted. The protein resides in the extracellular space. In terms of biological role, hemocyanins are copper-containing oxygen carriers occurring freely dissolved in the hemolymph of many mollusks and arthropods. The sequence is that of Hemocyanin subunit 6 from Maja squinado (Mediterranean spider crab).